The sequence spans 418 residues: Elongation factor Tu, chloroplastic (418 aa).

The tr-type G domain maps to 10 to 214; sequence KPHVNIGTIG…NVDSYIPTPQ (205 aa). The segment at 19 to 26 is G1; the sequence is GHVDHGKT. 19–26 is a GTP binding site; it reads GHVDHGKT. Threonine 26 contributes to the Mg(2+) binding site. The G2 stretch occupies residues 60 to 64; it reads GITIN. Positions 81 to 84 are G3; the sequence is DCPG. GTP-binding positions include 81–85 and 136–139; these read DCPGH and NKED. The segment at 136 to 139 is G4; the sequence is NKED. The interval 174–176 is G5; it reads SAL.

The protein belongs to the TRAFAC class translation factor GTPase superfamily. Classic translation factor GTPase family. EF-Tu/EF-1A subfamily.

The protein resides in the plastid. It is found in the chloroplast. It catalyses the reaction GTP + H2O = GDP + phosphate + H(+). GTP hydrolase that promotes the GTP-dependent binding of aminoacyl-tRNA to the A-site of ribosomes during protein biosynthesis. This Chlamydomonas reinhardtii (Chlamydomonas smithii) protein is Elongation factor Tu, chloroplastic (tufA).